Here is a 327-residue protein sequence, read N- to C-terminus: Phenylalanine--tRNA ligase alpha subunit (327 aa).

Position 252 (Glu-252) interacts with Mg(2+).

This sequence belongs to the class-II aminoacyl-tRNA synthetase family. Phe-tRNA synthetase alpha subunit type 1 subfamily. As to quaternary structure, tetramer of two alpha and two beta subunits. The cofactor is Mg(2+).

The protein localises to the cytoplasm. It carries out the reaction tRNA(Phe) + L-phenylalanine + ATP = L-phenylalanyl-tRNA(Phe) + AMP + diphosphate + H(+). The protein is Phenylalanine--tRNA ligase alpha subunit of Yersinia enterocolitica serotype O:8 / biotype 1B (strain NCTC 13174 / 8081).